Consider the following 766-residue polypeptide: BMP/retinoic acid-inducible neural-specific protein 3 (766 aa).

The first 33 residues, M1–A33, serve as a signal peptide directing secretion. The MACPF domain occupies R74–A264. N-linked (GlcNAc...) asparagine glycosylation is found at N168, N337, N456, N562, N609, and N641.

This sequence belongs to the BRINP family. Expressed in olfactory bulb, cerebellum and neuronal layers in hippocampus.

The protein localises to the secreted. Its subcellular location is the mitochondrion. Its function is as follows. Inhibits neuronal cell proliferation by negative regulation of the cell cycle transition. Promotes pituitary gonadotrope cell proliferation, migration and invasion, when overexpressed. May play a role in cell pituitary tumor development. The chain is BMP/retinoic acid-inducible neural-specific protein 3 (Brinp3) from Rattus norvegicus (Rat).